Here is a 61-residue protein sequence, read N- to C-terminus: Photosystem II reaction center protein K (61 aa).

Residues 1 to 24 (MLNIFNLICICFNSALFSSSFLFA) constitute a propeptide that is removed on maturation. A helical transmembrane segment spans residues 36–56 (IVDFMPVIPVLFFLLAFVWQA).

The protein belongs to the PsbK family. As to quaternary structure, PSII is composed of 1 copy each of membrane proteins PsbA, PsbB, PsbC, PsbD, PsbE, PsbF, PsbH, PsbI, PsbJ, PsbK, PsbL, PsbM, PsbT, PsbX, PsbY, PsbZ, Psb30/Ycf12, at least 3 peripheral proteins of the oxygen-evolving complex and a large number of cofactors. It forms dimeric complexes.

The protein localises to the plastid. Its subcellular location is the chloroplast thylakoid membrane. One of the components of the core complex of photosystem II (PSII). PSII is a light-driven water:plastoquinone oxidoreductase that uses light energy to abstract electrons from H(2)O, generating O(2) and a proton gradient subsequently used for ATP formation. It consists of a core antenna complex that captures photons, and an electron transfer chain that converts photonic excitation into a charge separation. In Gossypium barbadense (Sea Island cotton), this protein is Photosystem II reaction center protein K.